The chain runs to 81 residues: Short neurotoxin 1 (81 aa).

A signal peptide spans 1 to 21; the sequence is MKTLLLTLVVVTIVCLDLGYT. Intrachain disulfides connect C24–C43, C38–C60, C62–C73, and C74–C79.

The protein belongs to the three-finger toxin family. Short-chain subfamily. Type I alpha-neurotoxin sub-subfamily. Expressed by the venom gland.

The protein localises to the secreted. Its function is as follows. Binds to muscle nicotinic acetylcholine receptor (nAChR) and inhibit acetylcholine from binding to the receptor, thereby impairing neuromuscular transmission. The polypeptide is Short neurotoxin 1 (Tropidechis carinatus (Australian rough-scaled snake)).